Here is a 170-residue protein sequence, read N- to C-terminus: Cathelicidin antimicrobial peptide (170 aa).

Residues 1–30 (MKTQRDGHSLGGWSLMLLLLGLLMPLAIVA) form the signal peptide. The propeptide at 31–131 (QVLSYKEAVL…DISCDKDNRR (101 aa)) is cathelin-like domain (CLD). Intrachain disulfides connect cysteine 86-cysteine 97 and cysteine 108-cysteine 125. Residues 150–162 (FKRIVQRIKDFLQ) form an active core region.

Belongs to the cathelicidin family. As to quaternary structure, monomer, homodimer or homotrimer (in vitro). Oligomerizes as tetra- or hexamer in solution (in vitro). In terms of processing, proteolytically cleaved by proteinase PRTN3 into antibacterial peptide LL-37. Proteolytically cleaved by cathepsin CTSG and neutrophil elastase ELANE. Post-translationally, resistant to proteolytic degradation in solution, and when bound to both zwitterionic (mimicking mammalian membranes) and negatively charged membranes (mimicking bacterial membranes). After secretion onto the skin surface, the CAMP gene product is processed by a serine protease-dependent mechanism into multiple novel antimicrobial peptides distinct from and shorter than cathelicidin LL-37. These peptides show enhanced antimicrobial action, acquiring the ability to kill skin pathogens such as S.aureus, E.coli and C.albicans. These peptides have lost the ability to stimulate CXCL8/IL8 release from keratinocytes. The peptides act synergistically, killing bacteria at lower concentrations when present together, and maintain activity at increased salt condition.

It localises to the secreted. Its subcellular location is the vesicle. Its function is as follows. Antimicrobial protein that is an integral component of the innate immune system. Binds to bacterial lipopolysaccharides (LPS). Acts via neutrophil N-formyl peptide receptors to enhance the release of CXCL2. Postsecretory processing generates multiple cathelicidin antimicrobial peptides with various lengths which act as a topical antimicrobial defense in sweat on skin. The unprocessed precursor form, cathelicidin antimicrobial peptide, inhibits the growth of Gram-negative E.coli and E.aerogenes with efficiencies comparable to that of the mature peptide LL-37 (in vitro). Functionally, antimicrobial peptide that is an integral component of the innate immune system. Binds to bacterial lipopolysaccharides (LPS). Causes membrane permeabilization by forming transmembrane pores (in vitro). Causes lysis of E.coli. Exhibits antimicrobial activity against Gram-negative bacteria such as P.aeruginosa, S.typhimurium, E.aerogenes, E.coli and P.syringae, Gram-positive bacteria such as L.monocytogenes, S.epidermidis, S.pyogenes and S.aureus, as well as vancomycin-resistant enterococci (in vitro). Exhibits antimicrobial activity against methicillin-resistant S.aureus, P.mirabilis, and C.albicans in low-salt media, but not in media containing 100 mM NaCl (in vitro). Forms chiral supramolecular assemblies with quinolone signal (PQS) molecules of P.aeruginosa, which may lead to interference of bacterial quorum signaling and perturbance of bacterial biofilm formation. May form supramolecular fiber-like assemblies on bacterial membranes. Induces cytokine and chemokine producation as well as TNF/TNFA and CSF2/GMCSF production in normal human keratinocytes. Exhibits hemolytic activity against red blood cells. In terms of biological role, exhibits antimicrobial activity against E.coli and B.megaterium (in vitro). The protein is Cathelicidin antimicrobial peptide of Hylobates moloch (Silvery gibbon).